A 778-amino-acid chain; its full sequence is MASSEGSYRDLEKKLKNGLTSISQDIVDKYGNLKVSLNVNATAKLIFDRLENLEDIAEMSTRNLSNLIDQTAKDSPEMLAEIKSQAQSCENLVEFLQSMKNVEEQLIIMRSKTTNRVEWGTAILACKDFLNDTNMLLEGIGRDGFDMSVPLKHFAAEYSVLSYNCRYQLSADYERAMNVPKLSKQKCGDRTNVSFSVFNVGSVEDQKMLNETLSAMNMIGQLPERLDAWKIVILNVFCEAIVASRDGVDVYIVDNPTPDQTRFLINQKPRGKKDKTIDVAKVLESMEVFFTKLHSVLHSHELLDATGKTFTSMIGSVIEEQLITMILKDVIAIAAPVTETADEDQEMFINLLQIGEVFVERMKELGFFSQKAKLLFTLDTDTIFVTRRCFAIVSKANKLINETYDKLVTVGVDDSAIKDIDLLAKAHTHAEHFAKEYGKDLGRLWSHNEDSQFPSFFAFQKCTVSESTINFVNLLRDNVKAAFACEDEGARAKLALTAENIVRLYVILTPRKHAELFSSIPNMAAIFYNNCHYISHCIMTMSFEASGDNQKTLLEPLLLDSVIRLRTVAADCMEKTLTRCRREMTAYLEDHSIFEHLPASYKTTKNTFAAAEEMSESADILVPREEPKIIKCLAACLLHIRLIAKNLREPLTEVVYCKVIGSLVSFLLDSLVRHVVTTSDFRENDANVMADVFKRLLEVVANIVAYKEQTKVTDFCAREYFRLNEIVFVLGNRMQDIEHRWFNAKGPMAEHLSRSEVVGLIKALFADSQHRSDLIARL.

Residues 47 to 99 (FDRLENLEDIAEMSTRNLSNLIDQTAKDSPEMLAEIKSQAQSCENLVEFLQSM) are a coiled coil.

The protein belongs to the ZW10 family. Component of the RZZ complex composed of rod-1, czw-1 and zwl-1.

Its subcellular location is the chromosome. It localises to the centromere. The protein resides in the kinetochore. It is found in the cytoplasm. The protein localises to the cytoskeleton. Its subcellular location is the spindle. Essential component of the mitotic checkpoint, which prevents cells from prematurely exiting mitosis. Required for the assembly of the dynein-dynactin and mdf-1-mdf-2 complexes onto kinetochores. Its function related to the spindle assembly machinery and kinetochore-microtubule attachments likely depends on its association in the mitotic RZZ complex. The RZZ complex recruits the spindly-like protein spdl-1 to kinetochores. To prevent irregular chromosome segregation, the complex also inhibits the attachment of the kinetochore-associated NDC80 complex to microtubules. The recruitment of spdl-1 to kinetochores relieves this inhibition. Required for embryonic development. The sequence is that of Centromere/kinetochore protein zw10 homolog from Caenorhabditis elegans.